Reading from the N-terminus, the 320-residue chain is Arabinan endo-1,5-alpha-L-arabinosidase C (320 aa).

The N-terminal stretch at 1–15 (MKLALSLFLLSGSLA) is a signal peptide. The Proton acceptor role is filled by Asp31. 2 N-linked (GlcNAc...) asparagine glycosylation sites follow: Asn126 and Asn190. The active-site Proton donor is the Glu198.

This sequence belongs to the glycosyl hydrolase 43 family.

Its subcellular location is the secreted. The catalysed reaction is Endohydrolysis of (1-&gt;5)-alpha-arabinofuranosidic linkages in (1-&gt;5)-arabinans.. It participates in glycan metabolism; L-arabinan degradation. In terms of biological role, endo-1,5-alpha-L-arabinanase involved in degradation of pectin. Its preferred substrate is linear 1,5-alpha-L-arabinan. The sequence is that of Arabinan endo-1,5-alpha-L-arabinosidase C (abnC) from Emericella nidulans (strain FGSC A4 / ATCC 38163 / CBS 112.46 / NRRL 194 / M139) (Aspergillus nidulans).